Reading from the N-terminus, the 156-residue chain is S-ribosylhomocysteine lyase (156 aa).

Fe cation is bound by residues His-56, His-60, and Cys-123.

This sequence belongs to the LuxS family. Homodimer. Fe cation is required as a cofactor.

It carries out the reaction S-(5-deoxy-D-ribos-5-yl)-L-homocysteine = (S)-4,5-dihydroxypentane-2,3-dione + L-homocysteine. Its function is as follows. Involved in the synthesis of autoinducer 2 (AI-2) which is secreted by bacteria and is used to communicate both the cell density and the metabolic potential of the environment. The regulation of gene expression in response to changes in cell density is called quorum sensing. Catalyzes the transformation of S-ribosylhomocysteine (RHC) to homocysteine (HC) and 4,5-dihydroxy-2,3-pentadione (DPD). The protein is S-ribosylhomocysteine lyase of Staphylococcus haemolyticus (strain JCSC1435).